Reading from the N-terminus, the 315-residue chain is Outer membrane protease IcsP (315 aa).

Positions 1–20 are cleaved as a signal peptide; the sequence is MKLKFFVLALCVPAIFTTHA. Residues aspartate 103, aspartate 105, aspartate 230, and histidine 232 contribute to the active site.

This sequence belongs to the peptidase A26 family.

The protein resides in the cell outer membrane. In terms of biological role, protease responsible for the cleavage of IcsA between 'Arg-758' and 'Arg-759', removing the entire alpha domain from IscA localized on the bacterial surface. This proteolytic activity contributes to the maintenance of a tight polar cap of IcsA, which is important to Shigella actin-based motility. The chain is Outer membrane protease IcsP (icsP) from Shigella flexneri.